Here is a 115-residue protein sequence, read N- to C-terminus: uncharacterized protein (115 aa).

The next 3 membrane-spanning stretches (helical) occupy residues 7–27 (TLIF…IWFD), 40–60 (YALT…LLAA), and 72–92 (IVLV…YFYL).

It localises to the cell membrane. This is an uncharacterized protein from Haemophilus influenzae (strain ATCC 51907 / DSM 11121 / KW20 / Rd).